Reading from the N-terminus, the 208-residue chain is Dephospho-CoA kinase (208 aa).

A DPCK domain is found at 5–201 (IVALTGGIGS…QRYLALAASA (197 aa)). ATP is bound at residue 13-18 (GSGKST).

The protein belongs to the CoaE family.

It localises to the cytoplasm. It carries out the reaction 3'-dephospho-CoA + ATP = ADP + CoA + H(+). It participates in cofactor biosynthesis; coenzyme A biosynthesis; CoA from (R)-pantothenate: step 5/5. Catalyzes the phosphorylation of the 3'-hydroxyl group of dephosphocoenzyme A to form coenzyme A. The chain is Dephospho-CoA kinase from Sodalis glossinidius (strain morsitans).